A 157-amino-acid polypeptide reads, in one-letter code: Crossover junction endodeoxyribonuclease RuvC (157 aa).

Residues aspartate 7, glutamate 66, and aspartate 139 contribute to the active site. The Mg(2+) site is built by aspartate 7, glutamate 66, and aspartate 139.

It belongs to the RuvC family. In terms of assembly, homodimer which binds Holliday junction (HJ) DNA. The HJ becomes 2-fold symmetrical on binding to RuvC with unstacked arms; it has a different conformation from HJ DNA in complex with RuvA. In the full resolvosome a probable DNA-RuvA(4)-RuvB(12)-RuvC(2) complex forms which resolves the HJ. Mg(2+) is required as a cofactor.

It is found in the cytoplasm. The catalysed reaction is Endonucleolytic cleavage at a junction such as a reciprocal single-stranded crossover between two homologous DNA duplexes (Holliday junction).. In terms of biological role, the RuvA-RuvB-RuvC complex processes Holliday junction (HJ) DNA during genetic recombination and DNA repair. Endonuclease that resolves HJ intermediates. Cleaves cruciform DNA by making single-stranded nicks across the HJ at symmetrical positions within the homologous arms, yielding a 5'-phosphate and a 3'-hydroxyl group; requires a central core of homology in the junction. The consensus cleavage sequence is 5'-(A/T)TT(C/G)-3'. Cleavage occurs on the 3'-side of the TT dinucleotide at the point of strand exchange. HJ branch migration catalyzed by RuvA-RuvB allows RuvC to scan DNA until it finds its consensus sequence, where it cleaves and resolves the cruciform DNA. The sequence is that of Crossover junction endodeoxyribonuclease RuvC from Campylobacter curvus (strain 525.92).